A 697-amino-acid polypeptide reads, in one-letter code: MGPDRKEVPLSRGTQAVVVGKGRGAPGDDSSMGGRPSSPLDKQQRQHLRGQVDTLLRNFLPCYRGQLAASVLRQISRELGPQEPTGSQLLRSKKLPRVREHRGPLTQLRGHPPRWQPIFCVLRGDGRLEWFSHKEEYENGGHCLGSTALTGYTLLTSQREYLRLLDALCPESLGDHTQEEPDSLLEVPVSFPLFLQHPFRRHLCFSAATREAQHAWRLALQGGIRLQGIVLQRSQAPAARAFLDAVRLYRQHQGHFGDDDVTLGSDAEVLTAVLMREQLPALRAQTLPGLRGAGRARAWAWTELLDAVHAAVLAGASAGLCAFQPEKDELLASLEKTIRPDVDQLLRQRARVAGRLRTDIRGPLESCLRREVDPQLPRVVQTLLRTVEASLEAVRTLLAQGMDRLSHRLRQSPSGTRLRREVYSFGEMPWDLALMQTCYREAERSRGRLGQLAAPFGFLGMQSLVFGAQDLAQQLMADAVATFLQLADQCLTTALNCDQAAQRLERVRGRVLKKFKSDSGLAQRRFIRGWGLCIFLPFVLSQLEPGCKKELPEFEGDVLAVGSQALTTEGIYEDVIRGCLLQRIDQELKKTLGANDVSCTLDGCLEVPWEQEGAAPNLNLVSSFLAGRQAFTDFLCLPAKSSANWILAASLLSCSCFRSGFHRDSRVFLVQLAEGLSHSLETVSSHSVWSFRPTPRQ.

A disordered region spans residues 1 to 48 (MGPDRKEVPLSRGTQAVVVGKGRGAPGDDSSMGGRPSSPLDKQQRQHL).

This sequence belongs to the Niban family. Specifically expressed in B-lymphocytes.

The sequence is that of Protein Niban 3 from Homo sapiens (Human).